Consider the following 358-residue polypeptide: Uroporphyrinogen decarboxylase (358 aa).

Residues 29 to 33 (RQAGR), aspartate 79, tyrosine 156, threonine 211, and histidine 329 contribute to the substrate site.

Belongs to the uroporphyrinogen decarboxylase family. As to quaternary structure, homodimer.

It localises to the cytoplasm. The enzyme catalyses uroporphyrinogen III + 4 H(+) = coproporphyrinogen III + 4 CO2. It functions in the pathway porphyrin-containing compound metabolism; protoporphyrin-IX biosynthesis; coproporphyrinogen-III from 5-aminolevulinate: step 4/4. Its function is as follows. Catalyzes the decarboxylation of four acetate groups of uroporphyrinogen-III to yield coproporphyrinogen-III. The polypeptide is Uroporphyrinogen decarboxylase (Idiomarina loihiensis (strain ATCC BAA-735 / DSM 15497 / L2-TR)).